Reading from the N-terminus, the 575-residue chain is Suppressor of tumorigenicity 7 protein-like (575 aa).

A run of 2 helical transmembrane segments spans residues 36-56 and 80-100; these read GLAG…LYAL and FYVA…IFEW. Residues 125 to 147 form a disordered region; sequence GTESSISEPGSPSRNRENETSRQ. A compositionally biased stretch (polar residues) spans 126–137; the sequence is TESSISEPGSPS.

The protein belongs to the ST7 family.

Its subcellular location is the membrane. The chain is Suppressor of tumorigenicity 7 protein-like (ST7L) from Homo sapiens (Human).